A 323-amino-acid polypeptide reads, in one-letter code: Methionyl-tRNA formyltransferase (323 aa).

113 to 116 (SLLP) contributes to the (6S)-5,6,7,8-tetrahydrofolate binding site.

Belongs to the Fmt family.

The enzyme catalyses L-methionyl-tRNA(fMet) + (6R)-10-formyltetrahydrofolate = N-formyl-L-methionyl-tRNA(fMet) + (6S)-5,6,7,8-tetrahydrofolate + H(+). Its function is as follows. Attaches a formyl group to the free amino group of methionyl-tRNA(fMet). The formyl group appears to play a dual role in the initiator identity of N-formylmethionyl-tRNA by promoting its recognition by IF2 and preventing the misappropriation of this tRNA by the elongation apparatus. The protein is Methionyl-tRNA formyltransferase of Porphyromonas gingivalis (strain ATCC BAA-308 / W83).